Here is a 210-residue protein sequence, read N- to C-terminus: Peroxynitrite isomerase (210 aa).

Positions 21–27 match the GXWXGXG motif; it reads GQWEGQG. H190 contacts heme b.

This sequence belongs to the nitrobindin family. Homodimer. The cofactor is heme b.

It carries out the reaction peroxynitrite = nitrate. Its pathway is nitrogen metabolism. In terms of biological role, heme-binding protein able to scavenge peroxynitrite and to protect free L-tyrosine against peroxynitrite-mediated nitration, by acting as a peroxynitrite isomerase that converts peroxynitrite to nitrate. Therefore, this protein likely plays a role in peroxynitrite sensing and in the detoxification of reactive nitrogen and oxygen species (RNS and ROS, respectively). Is able to bind nitric oxide (NO) in vitro, but may act as a sensor of peroxynitrite levels in vivo. This Renibacterium salmoninarum (strain ATCC 33209 / DSM 20767 / JCM 11484 / NBRC 15589 / NCIMB 2235) protein is Peroxynitrite isomerase.